The chain runs to 458 residues: RuvB-like helicase 1 (458 aa).

A compositionally biased stretch (basic and acidic residues) spans 1–18 (MVQITEVKENQSSRESRT). Positions 1-20 (MVQITEVKENQSSRESRTAA) are disordered. 73–80 (GPPATGKT) is a binding site for ATP.

Belongs to the RuvB family. May form heterododecamers with RVB2. Component of the SWR1 chromatin remodeling complex, the INO80 chromatin remodeling complex, and of the R2TP complex.

The protein resides in the nucleus. It catalyses the reaction ATP + H2O = ADP + phosphate + H(+). DNA helicase which participates in several chromatin remodeling complexes, including the SWR1 and the INO80 complexes. The SWR1 complex mediates the ATP-dependent exchange of histone H2A for the H2A variant HZT1 leading to transcriptional regulation of selected genes by chromatin remodeling. The INO80 complex remodels chromatin by shifting nucleosomes and is involved in DNA repair. Also involved in pre-rRNA processing. The chain is RuvB-like helicase 1 (RVB1) from Candida albicans (strain SC5314 / ATCC MYA-2876) (Yeast).